The primary structure comprises 233 residues: 2-C-methyl-D-erythritol 4-phosphate cytidylyltransferase (233 aa).

The protein belongs to the IspD/TarI cytidylyltransferase family. IspD subfamily.

It catalyses the reaction 2-C-methyl-D-erythritol 4-phosphate + CTP + H(+) = 4-CDP-2-C-methyl-D-erythritol + diphosphate. It functions in the pathway isoprenoid biosynthesis; isopentenyl diphosphate biosynthesis via DXP pathway; isopentenyl diphosphate from 1-deoxy-D-xylulose 5-phosphate: step 2/6. Functionally, catalyzes the formation of 4-diphosphocytidyl-2-C-methyl-D-erythritol from CTP and 2-C-methyl-D-erythritol 4-phosphate (MEP). In Nitrosomonas eutropha (strain DSM 101675 / C91 / Nm57), this protein is 2-C-methyl-D-erythritol 4-phosphate cytidylyltransferase.